The chain runs to 593 residues: Isocitrate dehydrogenase kinase/phosphatase (593 aa).

Residues 315-321 and K336 each bind ATP; that span reads APGIRGM. Residue D371 is part of the active site.

Belongs to the AceK family.

It localises to the cytoplasm. It catalyses the reaction L-seryl-[isocitrate dehydrogenase] + ATP = O-phospho-L-seryl-[isocitrate dehydrogenase] + ADP + H(+). Bifunctional enzyme which can phosphorylate or dephosphorylate isocitrate dehydrogenase (IDH) on a specific serine residue. This is a regulatory mechanism which enables bacteria to bypass the Krebs cycle via the glyoxylate shunt in response to the source of carbon. When bacteria are grown on glucose, IDH is fully active and unphosphorylated, but when grown on acetate or ethanol, the activity of IDH declines drastically concomitant with its phosphorylation. The protein is Isocitrate dehydrogenase kinase/phosphatase of Salmonella typhi.